Reading from the N-terminus, the 400-residue chain is tRNA-specific adenosine deaminase 1 (400 aa).

The 325-residue stretch at 76 to 400 folds into the A to I editase domain; that stretch reads SIATGVKALP…WIPTRTDDVK (325 aa). His-101 contacts Zn(2+). Residue Glu-103 is the Proton donor of the active site. Arg-108 provides a ligand contact to 1D-myo-inositol hexakisphosphate. Residues Cys-157 and Cys-223 each contribute to the Zn(2+) site. 1D-myo-inositol hexakisphosphate contacts are provided by Lys-226, Arg-232, Lys-369, and Arg-375.

This sequence belongs to the ADAT1 family. The cofactor is 1D-myo-inositol hexakisphosphate. Zn(2+) serves as cofactor.

The enzyme catalyses adenosine(37) in tRNA(Ala) + H2O + H(+) = inosine(37) in tRNA(Ala) + NH4(+). Functionally, deaminates adenosine-37 to inosine in tRNA-Ala. The polypeptide is tRNA-specific adenosine deaminase 1 (TAD1) (Saccharomyces cerevisiae (strain ATCC 204508 / S288c) (Baker's yeast)).